The primary structure comprises 86 residues: RQC P-site tRNA stabilizing factor (86 aa).

The 62-residue stretch at 1–62 (MRLDKFLKVS…QKLVTVQVNE (62 aa)) folds into the S4 RNA-binding domain.

Belongs to the RqcP family. Associates with stalled 50S ribosomal subunits. Binds to RqcH, 23S rRNA and the P-site tRNA. Does not require RqcH for association with 50S subunits. Crystallized 50S subunits are variously associated with an A/P-site tRNA with or without RqcH, as well as with P- and E-site tRNAs but no RqcH. Displaced from the 50S subunit by puromycin but not thiostrepton.

Key component of the ribosome quality control system (RQC), a ribosome-associated complex that mediates the extraction of incompletely synthesized nascent chains from stalled ribosomes and their subsequent degradation. RqcH recruits Ala-charged tRNA, and with RqcP directs the elongation of stalled nascent chains on 50S ribosomal subunits, leading to non-templated C-terminal alanine extensions (Ala tail). The Ala tail promotes nascent chain degradation. RqcP is associated with the translocation-like movement of the peptidyl-tRNA from the A-site into the P-site. RqcH, RqcP and charged tRNA(Ala) are necessary and sufficient to add an Ala tail to a model stalled nascent peptide; does not add Val. The polypeptide is RQC P-site tRNA stabilizing factor (Bacillus subtilis (strain 168)).